Reading from the N-terminus, the 65-residue chain is Large ribosomal subunit protein bL35 (65 aa).

A disordered region spans residues 1-28; it reads MPKLKTRKAAARRFKATGSGKIKRRKAF.

This sequence belongs to the bacterial ribosomal protein bL35 family.

This Trichodesmium erythraeum (strain IMS101) protein is Large ribosomal subunit protein bL35.